The chain runs to 428 residues: Histone-lysine N-methyltransferase SMYD3 (428 aa).

Position 1 is an N-acetylmethionine (M1). Residues 4 to 240 (LKVEKFATAK…VGEELTICYL (237 aa)) enclose the SET domain. 14-16 (RGN) provides a ligand contact to S-adenosyl-L-methionine. T22 carries the post-translational modification Phosphothreonine. C49, C52, C62, C65, C71, C75, H83, and C87 together coordinate Zn(2+). The MYND-type zinc-finger motif lies at 49–87 (CDRCLLGKEKLMRCSQCRVAKYCSAKCQKKAWPDHKREC). S-adenosyl-L-methionine-binding positions include Y124, N132, N181, 205-206 (NH), Y239, and F259. The C-terminal domain; essential for histone methyltransferase activity, nuclear localization and mediates interaction with HSP90AA1 stretch occupies residues 272–428 (DADMLTGDEQ…EECDANIRAS (157 aa)).

It belongs to the class V-like SAM-binding methyltransferase superfamily. Histone-lysine methyltransferase family. Interacts with HSPCA. Interacts with HELZ. Interacts with POLR2A; the interaction may be indirect and may be mediated by HELZ. Interacts with HSP90AA1; this interaction enhances SMYD3 histone-lysine N-methyltransferase. As to expression, expressed in skeletal muscles and testis. Overexpressed in a majority of colorectal and hepatocellular carcinomas.

It localises to the cytoplasm. The protein resides in the nucleus. The enzyme catalyses L-lysyl(4)-[histone H3] + 3 S-adenosyl-L-methionine = N(6),N(6),N(6)-trimethyl-L-lysyl(4)-[histone H3] + 3 S-adenosyl-L-homocysteine + 3 H(+). With respect to regulation, histone methyltransferase activity strongly stimulated by HSPCA. Its function is as follows. Histone methyltransferase. Specifically methylates 'Lys-4' of histone H3, inducing di- and tri-methylation, but not monomethylation. Also methylates 'Lys-5' of histone H4. Plays an important role in transcriptional activation as a member of an RNA polymerase complex. Binds DNA containing 5'-CCCTCC-3' or 5'-GAGGGG-3' sequences. The chain is Histone-lysine N-methyltransferase SMYD3 (SMYD3) from Homo sapiens (Human).